A 653-amino-acid polypeptide reads, in one-letter code: Chromosomal replication initiator protein DnaA (653 aa).

Residues 1–100 (MADVPADLAA…SAGEPPASAS (100 aa)) form a domain I, interacts with DnaA modulators region. The disordered stretch occupies residues 86 to 310 (ITVDDSAGEP…PAPATGPGEP (225 aa)). The interval 101–312 (PAPPRYEEPE…PATGPGEPTA (212 aa)) is domain II. 2 stretches are compositionally biased toward basic and acidic residues: residues 120 to 150 (DPYE…DRHQ) and 221 to 267 (PSYD…RRNI). Positions 284 to 310 (GSALPASSGAPGPLAAQPAPATGPGEP) are enriched in low complexity. Positions 313 to 529 (RLNPKYLFDT…GALIRVTAFA (217 aa)) are domain III, AAA+ region. Positions 357, 359, 360, and 361 each coordinate ATP. Residues 530–653 (SLNRQPVDLG…TELTNRIKNG (124 aa)) are domain IV, binds dsDNA.

Belongs to the DnaA family. In terms of assembly, oligomerizes as a right-handed, spiral filament on DNA at oriC.

It localises to the cytoplasm. Functionally, plays an essential role in the initiation and regulation of chromosomal replication. ATP-DnaA binds to the origin of replication (oriC) to initiate formation of the DNA replication initiation complex once per cell cycle. Binds the DnaA box (a 9 base pair repeat at the origin) and separates the double-stranded (ds)DNA. Forms a right-handed helical filament on oriC DNA; dsDNA binds to the exterior of the filament while single-stranded (ss)DNA is stabiized in the filament's interior. The ATP-DnaA-oriC complex binds and stabilizes one strand of the AT-rich DNA unwinding element (DUE), permitting loading of DNA polymerase. After initiation quickly degrades to an ADP-DnaA complex that is not apt for DNA replication. Binds acidic phospholipids. The sequence is that of Chromosomal replication initiator protein DnaA from Streptomyces avermitilis (strain ATCC 31267 / DSM 46492 / JCM 5070 / NBRC 14893 / NCIMB 12804 / NRRL 8165 / MA-4680).